The chain runs to 442 residues: Elongation factor 1-gamma (442 aa).

In terms of domain architecture, GST N-terminal spans 2 to 87; the sequence is AAGTLYTYPE…FLSNDALRGS (86 aa). Residues 88–216 form the GST C-terminal domain; it reads TPQASAQVLQ…VKLCEKMAQF (129 aa). Composition is skewed to basic and acidic residues over residues 224 to 242 and 249 to 263; these read MQPK…KEGG and QEKK…KAAP. Positions 224–273 are disordered; sequence MQPKKEAPAKKEKAGKEGGKQQQPQQEKKEKKKEEKKAAPAEEEMDECEA. Residues 281–442 form the EF-1-gamma C-terminal domain; the sequence is AKDPYAHLPK…KSFNQGKIFK (162 aa).

As to quaternary structure, EF-1 is composed of four subunits: alpha, beta, delta, and gamma.

Its function is as follows. Probably plays a role in anchoring the complex to other cellular components. In Carassius auratus (Goldfish), this protein is Elongation factor 1-gamma (eef1g).